Here is a 355-residue protein sequence, read N- to C-terminus: 3-dehydroquinate synthase (355 aa).

Residues Ser-66–Lys-71, Gly-100–Asp-104, Thr-124–Thr-125, Lys-136, Lys-145, and Phe-163–Thr-166 each bind NAD(+). Residues Glu-178, His-242, and His-256 each contribute to the Zn(2+) site.

The protein belongs to the sugar phosphate cyclases superfamily. Dehydroquinate synthase family. It depends on Co(2+) as a cofactor. Zn(2+) is required as a cofactor. NAD(+) serves as cofactor.

Its subcellular location is the cytoplasm. The enzyme catalyses 7-phospho-2-dehydro-3-deoxy-D-arabino-heptonate = 3-dehydroquinate + phosphate. Its pathway is metabolic intermediate biosynthesis; chorismate biosynthesis; chorismate from D-erythrose 4-phosphate and phosphoenolpyruvate: step 2/7. Catalyzes the conversion of 3-deoxy-D-arabino-heptulosonate 7-phosphate (DAHP) to dehydroquinate (DHQ). This Staphylococcus saprophyticus subsp. saprophyticus (strain ATCC 15305 / DSM 20229 / NCIMB 8711 / NCTC 7292 / S-41) protein is 3-dehydroquinate synthase.